The sequence spans 156 residues: Probable inactive ribonuclease-like protein 13 (156 aa).

An N-terminal signal peptide occupies residues 1-20 (MAPAVTRLLFLQLVLGPTLV). N-linked (GlcNAc...) asparagine glycosylation is present at Asn-126.

This sequence belongs to the pancreatic ribonuclease family.

It is found in the secreted. Does not exhibit any ribonuclease activity. The polypeptide is Probable inactive ribonuclease-like protein 13 (RNASE13) (Homo sapiens (Human)).